Reading from the N-terminus, the 472-residue chain is MKIKTRFAPSPTGYLHVGGARTALYSWLFARNHGGEFVLRIEDTDLERSTPEAIEAIMDGMNWLNLQWDEGPYFQTKRFDRYNNVIDEMLEAGTAYKCYCSKERLEALREEQMAKGEKPRYDGRCRHSHEHHADDEPCVVRFANPQQGSVIFDDQIRGPIEFSNQELDDLIIRRTDGSPTYNFCVVVDDWDMAITHVIRGEDHINNTPRQINILKALNAPVPVYAHVSMINGDDGKKLSKRHGAVSVMQYRDDGYLPEALLNYLVRLGWSHGDQEIFTREEMIEFFSLGAVSKSASAFNTDKLLWLNHHYINTLPAEYVATHLQWHIEQENIDTRNGPQLAELVKLLGERCKTLKEMAQSCRYFYEEFAEFDADAAKKHLRPVARQPLEMVRDKLAAISDWTAENVHHAIQATADELEVGMGKVGMPLRVAVTGAGQSPALDVTVHAIGKSRSVDRINKALAFIAEREGQAS.

Positions 9–19 (PSPTGYLHVGG) match the 'HIGH' region motif. The Zn(2+) site is built by Cys-98, Cys-100, Cys-125, and His-127. Residues 237–241 (KLSKR) carry the 'KMSKS' region motif. Residue Lys-240 participates in ATP binding.

Belongs to the class-I aminoacyl-tRNA synthetase family. Glutamate--tRNA ligase type 1 subfamily. In terms of assembly, monomer. Zn(2+) serves as cofactor.

Its subcellular location is the cytoplasm. It catalyses the reaction tRNA(Glu) + L-glutamate + ATP = L-glutamyl-tRNA(Glu) + AMP + diphosphate. Its function is as follows. Catalyzes the attachment of glutamate to tRNA(Glu) in a two-step reaction: glutamate is first activated by ATP to form Glu-AMP and then transferred to the acceptor end of tRNA(Glu). The chain is Glutamate--tRNA ligase from Klebsiella pneumoniae subsp. pneumoniae (strain ATCC 700721 / MGH 78578).